The following is a 28-amino-acid chain: Venom protein (28 aa).

Positions 1-28 (KEGYPDGQNGKKIPCAINDNISKTXEQA) are disordered. A compositionally biased stretch (polar residues) spans 19 to 28 (DNISKTXEQA).

As to expression, expressed by the venom gland.

The protein localises to the secreted. In terms of biological role, causes symptoms of mild intoxication and transient paralysis in insects (A.domestica). This chain is Venom protein, found in Rhopalurus junceus (Caribbean blue scorpion).